Reading from the N-terminus, the 462-residue chain is Fumarate hydratase class II (462 aa).

Substrate-binding positions include 97-99 (SGT), 127-130 (HPND), 137-139 (SSN), and Thr-185. His-186 (proton donor/acceptor) is an active-site residue. The active site involves Ser-316. Substrate is bound by residues Ser-317 and 322 to 324 (KVN).

Belongs to the class-II fumarase/aspartase family. Fumarase subfamily. Homotetramer.

It localises to the cytoplasm. It catalyses the reaction (S)-malate = fumarate + H2O. The protein operates within carbohydrate metabolism; tricarboxylic acid cycle; (S)-malate from fumarate: step 1/1. Its function is as follows. Involved in the TCA cycle. Catalyzes the stereospecific interconversion of fumarate to L-malate. The protein is Fumarate hydratase class II of Bacillus cereus (strain ATCC 14579 / DSM 31 / CCUG 7414 / JCM 2152 / NBRC 15305 / NCIMB 9373 / NCTC 2599 / NRRL B-3711).